The sequence spans 129 residues: uncharacterized protein (129 aa).

This is an uncharacterized protein from Archaeoglobus fulgidus (strain ATCC 49558 / DSM 4304 / JCM 9628 / NBRC 100126 / VC-16).